A 343-amino-acid polypeptide reads, in one-letter code: Small ribosomal subunit biogenesis GTPase RsgA (343 aa).

The region spanning 116–275 (RGQLKPVAAN…LIDSPGIREF (160 aa)) is the CP-type G domain. GTP contacts are provided by residues 163–166 (NKAD) and 217–225 (GQSGVGKSS). The Zn(2+) site is built by cysteine 299, cysteine 304, histidine 306, and cysteine 312.

It belongs to the TRAFAC class YlqF/YawG GTPase family. RsgA subfamily. As to quaternary structure, monomer. Associates with 30S ribosomal subunit, binds 16S rRNA. Requires Zn(2+) as cofactor.

The protein resides in the cytoplasm. One of several proteins that assist in the late maturation steps of the functional core of the 30S ribosomal subunit. Helps release RbfA from mature subunits. May play a role in the assembly of ribosomal proteins into the subunit. Circularly permuted GTPase that catalyzes slow GTP hydrolysis, GTPase activity is stimulated by the 30S ribosomal subunit. This is Small ribosomal subunit biogenesis GTPase RsgA from Pseudomonas fluorescens (strain ATCC BAA-477 / NRRL B-23932 / Pf-5).